The sequence spans 387 residues: 3-ketoacyl-CoA thiolase (387 aa).

The Acyl-thioester intermediate role is filled by cysteine 91. Catalysis depends on proton acceptor residues histidine 343 and cysteine 373.

The protein belongs to the thiolase-like superfamily. Thiolase family. Heterotetramer of two alpha chains (FadB) and two beta chains (FadA).

The protein resides in the cytoplasm. It catalyses the reaction an acyl-CoA + acetyl-CoA = a 3-oxoacyl-CoA + CoA. It participates in lipid metabolism; fatty acid beta-oxidation. Functionally, catalyzes the final step of fatty acid oxidation in which acetyl-CoA is released and the CoA ester of a fatty acid two carbons shorter is formed. The chain is 3-ketoacyl-CoA thiolase from Shewanella frigidimarina (strain NCIMB 400).